A 30-amino-acid polypeptide reads, in one-letter code: uncharacterized protein (30 aa).

This is an uncharacterized protein from Saccharomyces cerevisiae (strain ATCC 204508 / S288c) (Baker's yeast).